We begin with the raw amino-acid sequence, 267 residues long: Large ribosomal subunit protein bL9m (267 aa).

Residues Met1–Gly52 constitute a mitochondrion transit peptide.

This sequence belongs to the bacterial ribosomal protein bL9 family. In terms of assembly, component of the mitochondrial ribosome large subunit (39S) which comprises a 16S rRNA and about 50 distinct proteins.

The protein resides in the mitochondrion. This Papio anubis (Olive baboon) protein is Large ribosomal subunit protein bL9m (MRPL9).